Here is a 130-residue protein sequence, read N- to C-terminus: Transcription antitermination protein NusB (130 aa).

This sequence belongs to the NusB family.

Functionally, involved in transcription antitermination. Required for transcription of ribosomal RNA (rRNA) genes. Binds specifically to the boxA antiterminator sequence of the ribosomal RNA (rrn) operons. This is Transcription antitermination protein NusB from Bacillus mycoides (strain KBAB4) (Bacillus weihenstephanensis).